The chain runs to 319 residues: 1-aminocyclopropane-1-carboxylate oxidase 4 (319 aa).

A Fe2OG dioxygenase domain is found at 153–253; that stretch reads PNFGTKVSNY…RMSLASFYNP (101 aa). Positions 177, 179, and 234 each coordinate Fe cation.

The protein belongs to the iron/ascorbate-dependent oxidoreductase family. Requires Fe cation as cofactor.

It carries out the reaction 1-aminocyclopropane-1-carboxylate + L-ascorbate + O2 = ethene + L-dehydroascorbate + hydrogen cyanide + CO2 + 2 H2O. Its pathway is alkene biosynthesis; ethylene biosynthesis via S-adenosyl-L-methionine; ethylene from S-adenosyl-L-methionine: step 2/2. This chain is 1-aminocyclopropane-1-carboxylate oxidase 4 (ACO4), found in Petunia hybrida (Petunia).